We begin with the raw amino-acid sequence, 430 residues long: Trigger factor (430 aa).

The PPIase FKBP-type domain occupies 163 to 248; sequence GDTVVFDFAG…IHEIKAQELP (86 aa).

Belongs to the FKBP-type PPIase family. Tig subfamily.

It is found in the cytoplasm. It catalyses the reaction [protein]-peptidylproline (omega=180) = [protein]-peptidylproline (omega=0). Functionally, involved in protein export. Acts as a chaperone by maintaining the newly synthesized protein in an open conformation. Functions as a peptidyl-prolyl cis-trans isomerase. The polypeptide is Trigger factor (Exiguobacterium sibiricum (strain DSM 17290 / CCUG 55495 / CIP 109462 / JCM 13490 / 255-15)).